The chain runs to 152 residues: Protein-export protein SecB (152 aa).

This sequence belongs to the SecB family. As to quaternary structure, homotetramer, a dimer of dimers. One homotetramer interacts with 1 SecA dimer.

It localises to the cytoplasm. Functionally, one of the proteins required for the normal export of preproteins out of the cell cytoplasm. It is a molecular chaperone that binds to a subset of precursor proteins, maintaining them in a translocation-competent state. It also specifically binds to its receptor SecA. This chain is Protein-export protein SecB, found in Dechloromonas aromatica (strain RCB).